A 149-amino-acid chain; its full sequence is MHKRVVDFIKKQYLFTLACTENNLPWANAFYYVFDEKENRLIYITGDQTHHAKVLRNNSRVAGTIFVPTKFVPSLQGVQFTGRSSQLFSTQAEQARALYKTEYSHHLIDQLTVWQVELEYVRLVDNSLGLFSTIEWRKGQVVEETDHYA.

The protein belongs to the UPF0306 family.

The polypeptide is UPF0306 protein PM1958 (Pasteurella multocida (strain Pm70)).